The sequence spans 333 residues: Protein APEM9 (333 aa).

Residues 1–90 lie on the Cytoplasmic side of the membrane; that stretch reads MEATDIWGEI…ELRDVFGEVA (90 aa). Residues 91-102 traverse the membrane as a helical segment; it reads AIPVQVLLTGVC. Residues 103–268 are Peroxisomal-facing; the sequence is LQISNGSYLG…KVGNTQFSMS (166 aa). Residues 269–285 traverse the membrane as a helical segment; sequence RGKVAVSLVGLIICYAL. Residues 286 to 333 lie on the Cytoplasmic side of the membrane; that stretch reads KRKRAALIRIIRRQMESTRKAIVDFWKLAFSYQVNPLAAIQSIPSTTT.

As to quaternary structure, interacts with PEX6 and PEX19-1, but not with PEX1. Interacts (via N-terminus) with PEX13, and (via N-terminus and C-terminus) with PEX16. As to expression, expressed in roots, leaves, stems, flowers, buds and fruits.

The protein localises to the peroxisome membrane. Involved in peroxisome biogenesis and matrix protein import. Required for pollen maturation and in vivo germination via its role in peroxisomal function, which partially involves jasmonic acid biosynthesis. Transported to peroxisomes via the interaction with PEX19-1. Required for peroxisomal protein import by acting as an anchoring protein for the AAA ATPase complex, which consists of PEX1 and PEX6. This chain is Protein APEM9, found in Arabidopsis thaliana (Mouse-ear cress).